A 286-amino-acid chain; its full sequence is Aquaporin PIP2-4 (286 aa).

The next 2 membrane-spanning stretches (helical) occupy residues 40 to 60 (ALIA…ATVI) and 77 to 97 (CGGV…FILV). An NPA 1 motif is present at residues 109–111 (NPA). The next 3 membrane-spanning stretches (helical) occupy residues 128-148 (LLYM…VKGF), 170-190 (GTGL…VFSA), and 204-224 (VLAP…TIPI). The NPA 2 motif lies at 230 to 232 (NPA). Residues 252-272 (IFWVGPFIGAAIAALYHQVIL) form a helical membrane-spanning segment.

The protein belongs to the MIP/aquaporin (TC 1.A.8) family. PIP (TC 1.A.8.11) subfamily. As to expression, expressed in roots.

It localises to the cell membrane. Functionally, water channel required to facilitate the transport of water across cell membrane. May play a role in root water uptake. In Oryza sativa subsp. japonica (Rice), this protein is Aquaporin PIP2-4 (PIP2-4).